We begin with the raw amino-acid sequence, 198 residues long: Ribosome maturation factor RimP (198 aa).

It belongs to the RimP family.

It is found in the cytoplasm. Its function is as follows. Required for maturation of 30S ribosomal subunits. The polypeptide is Ribosome maturation factor RimP (Rhizobium etli (strain ATCC 51251 / DSM 11541 / JCM 21823 / NBRC 15573 / CFN 42)).